The chain runs to 601 residues: uncharacterized protein (601 aa).

The segment covering 24 to 35 (RKSNVVLKKNKG) has biased composition (basic residues). Disordered regions lie at residues 24–106 (RKSN…LKLD) and 171–219 (YGND…PREE). A compositionally biased stretch (polar residues) spans 54–81 (SQFSSRDNFRTTQTQASSSSEPSDNTNR). Over residues 92 to 106 (TPKKEESNAEKLKLD) the composition is skewed to basic and acidic residues. 2 positions are modified to phosphoserine: Ser236 and Ser238. Positions 260–283 (RKRKVLSSSSEDDESSSPEDLLKP) are disordered.

The protein resides in the nucleus. This is an uncharacterized protein from Schizosaccharomyces pombe (strain 972 / ATCC 24843) (Fission yeast).